A 231-amino-acid chain; its full sequence is GTP-binding protein RHO3 (231 aa).

23–30 contacts GTP; the sequence is GDGACGKT. The Effector region signature appears at 45 to 53; sequence YEPTVFENY. GTP contacts are provided by residues 70–74 and 128–131; these read DTAGQ and LKCD. The span at 139-150 shows a compositional bias: polar residues; sequence SNAITPNNIQQD. Residues 139-165 are disordered; that stretch reads SNAITPNNIQQDNSVSNDNGNNINSTS. Over residues 151–165 the composition is skewed to low complexity; the sequence is NSVSNDNGNNINSTS. A Cysteine methyl ester modification is found at cysteine 228. A lipid anchor (S-farnesyl cysteine) is attached at cysteine 228. A propeptide spans 229–231 (removed in mature form); sequence TIM.

It belongs to the small GTPase superfamily. Rho family. In terms of assembly, interacts with TOS7.

Its subcellular location is the cell membrane. Its activity is regulated as follows. Activity is positively regulated by the GTPase activating protein (GAP) RGD1. Functionally, plays an important role in cell growth. Required to keep the uninucleated state. Modulates morphogenesis during bud growth via directing organization of the actin cytoskeleton and the position of the secretory machinery for exocytosis. This Saccharomyces cerevisiae (strain ATCC 204508 / S288c) (Baker's yeast) protein is GTP-binding protein RHO3.